The chain runs to 118 residues: Sarafotoxin-i1 (118 aa).

The signal sequence occupies residues 1-23 (MALLPRLAAGGLLLLLALAALDG). The propeptide occupies 24-84 (KPAPPKLLQK…LSPLRKPQPL (61 aa)). Cystine bridges form between cysteine 85–cysteine 99 and cysteine 87–cysteine 95. The propeptide occupies 112 to 118 (PSPIQSS).

This sequence belongs to the endothelin/sarafotoxin family. In terms of processing, different length molecules ranging from 15 (85-99) to 30 amino acids (85-114) have been found in the venom. Expressed by the venom gland.

It localises to the secreted. Functionally, vasoconstrictor activity. These toxins cause cardiac arrest probably as a result of coronary vasospasm. Its function is as follows. Sarafotoxin-i3: vasoconstrictor activity. Causes cardiac arrest probably as a result of coronary vasospasm. Displays low agonistic activities towards endothelin-2 receptor (EDNRB) (displays affinity in the micromolar range). The polypeptide is Sarafotoxin-i1 (Atractaspis irregularis (Variable burrowing asp)).